Reading from the N-terminus, the 395-residue chain is Accessory Sec system protein translocase subunit SecY2 (395 aa).

10 helical membrane-spanning segments follow: residues 13–33 (VSFSLFIVIIYVMGLYIPLPF), 63–83 (ISIFSIGLNPLMFSMLIIQLL), 102–122 (LMQFLTMIITIIQAALLVFAF), 128–148 (GLEDFEMILILSAGSCLVVWL), 157–177 (VGASAPVILTSILNGAIPNII), 190–210 (WIWLAALAIFILLLIKFWLAF), 239–259 (MAAMMMYMVGMAILTLPLMVG), 272–292 (VFQASFSAVMGILIFYFFTFV), 326–346 (LIWIIAFPGAVLNAFQLVFGL), and 355–375 (YAGFAIIPMNVVMITMFMGGI).

It belongs to the SecY/SEC61-alpha family. SecY2 subfamily. Component of the accessory SecA2/SecY2 protein translocase complex required to export cell wall proteins. May form heterotrimers with SecE and SecG subunits.

The protein localises to the cell membrane. Its function is as follows. Part of the accessory SecA2/SecY2 system specifically required for export of possible cell wall proteins. The central subunit of a protein translocation channel. The sequence is that of Accessory Sec system protein translocase subunit SecY2 from Lactobacillus johnsonii (strain CNCM I-12250 / La1 / NCC 533).